The following is a 548-amino-acid chain: (2S)-methylsuccinyl-CoA dehydrogenase (548 aa).

Residues 282-291 (AVFTEPNTGS) and 315-317 (WIT) each bind FAD. Ser291 serves as a coordination point for substrate. A substrate-binding site is contributed by 409-412 (ESAR). FAD contacts are provided by residues Arg437 and 505–509 (QIHGG). Residue Glu532 is the Proton acceptor of the active site. Residue 534 to 536 (AAE) coordinates FAD.

Belongs to the acyl-CoA dehydrogenase family. As to quaternary structure, homodimer. FAD is required as a cofactor.

It catalyses the reaction (2S)-methylsuccinyl-CoA + oxidized [electron-transfer flavoprotein] + H(+) = 2-methylfumaryl-CoA + reduced [electron-transfer flavoprotein]. Functionally, involved in the ethylmalonyl-CoA pathway, a new acetyl-CoA assimilation strategy that operates in a number of bacteria and replaces the glyoxylate cycle. Catalyzes the oxidation of (2S)-methylsuccinyl-CoA to yield mesaconyl-(C1)-CoA. Highly specific for (S)-methylsuccinyl-CoA. In Cereibacter sphaeroides (Rhodobacter sphaeroides), this protein is (2S)-methylsuccinyl-CoA dehydrogenase.